The primary structure comprises 280 residues: Protein phosphatase 1 regulatory subunit 3B-A (280 aa).

Positions 58–61 match the PP1-binding motif motif; it reads RVSF. In terms of domain architecture, CBM21 spans 121–229; that stretch reads RNRLQADSVC…SNKSLNYKIA (109 aa).

In terms of assembly, interacts with glycogen, PPP1CC catalytic subunit of PP1 and PYGL. Associates with glycogen particles. Forms complexes with debranching enzyme, glycogen phosphorylase, glycogen synthase and phosphorylase kinase which is necessary for its regulation of PP1 activity.

Functionally, acts as a glycogen-targeting subunit for phosphatase PP1. Facilitates interaction of the PP1 with enzymes of the glycogen metabolism and regulates its activity. Suppresses the rate at which PP1 dephosphorylates (inactivates) glycogen phosphorylase and enhances the rate at which it activates glycogen synthase and therefore limits glycogen breakdown. The sequence is that of Protein phosphatase 1 regulatory subunit 3B-A (ppp1r3b-a) from Xenopus laevis (African clawed frog).